A 173-amino-acid polypeptide reads, in one-letter code: Globin-like host-protective antigen (173 aa).

Residues 1 to 15 (MRFLLLAAFVAYAYA) form the signal peptide. Residues 25–166 (ALSALDVVPL…FNDEAQKQLA (142 aa)) form the Globin domain. Residue His114 participates in heme b binding.

Belongs to the globin family.

The protein localises to the secreted. It localises to the extracellular space. Its function is as follows. May be a globin and may play a role in oxygen transport. This chain is Globin-like host-protective antigen, found in Trichostrongylus colubriformis (Black scour worm).